Here is a 127-residue protein sequence, read N- to C-terminus: Phospholipase A2 homolog otoconin-22 (127 aa).

N-linked (GlcNAc...) asparagine glycosylation occurs at N20. Intrachain disulfides connect C26–C120, C28–C44, C43–C99, C49–C127, C50–C92, C59–C85, and C78–C90. A glycan (N-linked (GlcNAc...) asparagine) is linked at N113.

Belongs to the phospholipase A2 family. In terms of assembly, monomer. As to expression, otoconial membrane in the maculae of the saccule and utricle. Otoconia are composites of proteins and inorganic crystals formed in the peripheral portion of the vestibular system of vertebrates. The otoconial membranes contain small crystals of calcium carbonate known as otoliths (ear stones) if there is a single deposit or as otoconia (ear dust) if there are many. Each mineral polymorph of otoconia has a protein unique to that polymorph.

It is found in the secreted. Major protein of the aragonitic otoconia. It is unlikely that this protein has phospholipase A2 activity. The sequence is that of Phospholipase A2 homolog otoconin-22 from Xenopus laevis (African clawed frog).